We begin with the raw amino-acid sequence, 214 residues long: Peptide methionine sulfoxide reductase B1, chloroplastic (214 aa).

Residues 1 to 53 constitute a chloroplast transit peptide; sequence MAMRQYAAATAASSSFRARPRARPSCLPAAALPLAPCCGVAWSRASYRRASVR. Positions 58-81 are enriched in low complexity; the sequence is ASSSSSSSSSSPSPQGQAQAQAQG. The segment at 58–91 is disordered; that stretch reads ASSSSSSSSSSPSPQGQAQAQAQGKPNYSTSLTD. One can recognise a MsrB domain in the interval 91-213; sequence DEEWRKRLTK…NSASLKLKKT (123 aa). Positions 130, 133, 179, and 182 each coordinate Zn(2+). Cysteine 202 functions as the Nucleophile in the catalytic mechanism.

This sequence belongs to the MsrB Met sulfoxide reductase family. Requires Zn(2+) as cofactor. Expressed in leaves and flowers.

It is found in the plastid. The protein resides in the chloroplast. It carries out the reaction L-methionyl-[protein] + [thioredoxin]-disulfide + H2O = L-methionyl-(R)-S-oxide-[protein] + [thioredoxin]-dithiol. Catalyzes the reduction of methionine sulfoxide (MetSO) to methionine in proteins. Involved in abiotic stress response. Plays a protective role against oxidative stress by restoring activity to proteins that have been inactivated by methionine oxidation. MSRB family specifically reduces the MetSO R-enantiomer. The chain is Peptide methionine sulfoxide reductase B1, chloroplastic from Oryza sativa subsp. japonica (Rice).